A 1838-amino-acid chain; its full sequence is Collagen alpha-1(V) chain (1838 aa).

A signal peptide spans 1-37 (MDVHTRWKARSALRPGAPLLPPLLLLLLWAPPPSRAA). Positions 72–244 (DVAYRVTKDA…DYCEHYSPDC (173 aa)) constitute a Laminin G-like domain. Positions 231–443 (RAAYDYCEHY…MPANQDTIYE (213 aa)) are nonhelical region. A sulfotyrosine mark is found at Tyr234, Tyr236, Tyr240, Tyr262, and Tyr263. Disordered stretches follow at residues 242–269 (PDCD…GDGE), 281–457 (EDPE…QKGE), 470–520 (PPGP…GTML), 526–545 (FGGG…QESQ), and 559–1574 (GPAG…EVIQ). Over residues 258–269 (NPDEYYTEGDGE) the composition is skewed to acidic residues. Residues 285-304 (DLGKEPTPSKKPVEAAKETT) are compositionally biased toward basic and acidic residues. The segment covering 309 to 323 (ELTPTPTEAAPMPET) has biased composition (low complexity). Residues Tyr338, Tyr340, Tyr346, and Tyr347 each carry the sulfotyrosine modification. Polar residues predominate over residues 377-388 (PTSTADTSNSSN). The span at 396 to 406 (GADDLEGEFTE) shows a compositional bias: acidic residues. Sulfotyrosine occurs at positions 416, 417, 420, and 421. The span at 417 to 428 (YDPYYDPTSSPS) shows a compositional bias: low complexity. Residues 444 to 558 (GIGGPRGEKG…ILQQARLALR (115 aa)) form an interrupted collagenous region region. Over residues 470-485 (PPGPEGPAGLPGPPGT) the composition is skewed to pro residues. Residues 506 to 520 (LPGADGLPGPPGTML) show a composition bias toward low complexity. The triple-helical region stretch occupies residues 559 to 1570 (GPAGPMGLTG…GPPGPPGPPG (1012 aa)). A hydroxyproline mark is found at Pro570 and Pro576. Residues 587-597 (DVGPQGPRGVQ) show a composition bias toward low complexity. Pro621 bears the Hydroxyproline mark. Lys627 is subject to 5-hydroxylysine. Hydroxyproline is present on Pro639. Lys642 is modified (5-hydroxylysine). Residues Pro648, Pro654, Pro657, Pro675, and Pro678 each carry the hydroxyproline modification. Residues 671-686 (PRGLPGEPGPRGLLGP) show a composition bias toward low complexity. A 5-hydroxylysine modification is found at Lys687. Positions 687 to 696 (KGPPGPPGPP) are enriched in pro residues. Hydroxyproline is present on residues Pro690, Pro696, and Pro705. Lys708 bears the 5-hydroxylysine mark. Hydroxyproline occurs at positions 717, 720, 726, and 732. The span at 722 to 741 (QQGNPGAQGLPGPQGAIGPP) shows a compositional bias: low complexity. Lys744 carries the post-translational modification 5-hydroxylysine. A compositionally biased stretch (low complexity) spans 747–756 (LGKPGLPGMP). Residues Pro750, Pro756, Pro762, Pro765, and Pro771 each carry the hydroxyproline modification. Residue Lys774 is modified to 5-hydroxylysine. Hydroxyproline occurs at positions 780 and 789. 5-hydroxylysine is present on residues Lys795, Lys804, Lys807, and Lys810. Residue Pro816 is modified to Hydroxyproline. Residue Lys819 is modified to 5-hydroxylysine. Pro834 is modified (hydroxyproline). The segment covering 837–846 (RGEDGPEGPK) has biased composition (basic and acidic residues). At Lys846 the chain carries 5-hydroxylysine. Pro861 bears the Hydroxyproline mark. Lys864 carries the 5-hydroxylysine modification. A compositionally biased stretch (low complexity) spans 867–876 (LGVPGLPGYP). Residues Pro870, Pro873, and Pro876 each carry the hydroxyproline modification. Lys882 is modified (5-hydroxylysine). Residues Pro888 and Pro891 each carry the hydroxyproline modification. Residue Lys897 is modified to 5-hydroxylysine. Pro903 and Pro906 each carry hydroxyproline. Residues 908 to 917 (PRGQRGPTGP) are compositionally biased toward low complexity. A hydroxyproline mark is found at Pro930 and Pro945. Low complexity-rich tracts occupy residues 971-990 (KDGL…QGKT) and 999-1011 (VGPQ…TGPM). A hydroxyproline mark is found at Pro1017, Pro1020, Pro1023, and Pro1029. Positions 1088-1104 (SPGERGPAGAAGPIGIP) are enriched in low complexity. The segment covering 1106–1115 (RPGPQGPPGP) has biased composition (pro residues). Over residues 1116 to 1140 (AGEKGAPGEKGPQGPAGRDGLQGPV) the composition is skewed to low complexity. Hydroxyproline occurs at positions 1221 and 1224. Low complexity predominate over residues 1259–1268 (PSGAPGADGP). 2 stretches are compositionally biased toward pro residues: residues 1380–1398 (TGEP…PGPA) and 1454–1469 (SPGP…PPGL). A hydroxyproline mark is found at Pro1467 and Pro1470. Positions 1485–1494 (PGLIGLIGPP) are enriched in low complexity. The segment covering 1526-1541 (PIGPPGPPGLPGPPGP) has biased composition (pro residues). A compositionally biased stretch (low complexity) spans 1542–1554 (KGAKGSSGPTGPK). Over residues 1560–1569 (PGPPGPPGPP) the composition is skewed to pro residues. The tract at residues 1571–1605 (EVIQPLPIQASRTRRNIDASQLLDDGNGENYVDYA) is nonhelical region. 2 positions are modified to sulfotyrosine: Tyr1601 and Tyr1604. Residues 1606–1838 (DGMEEIFGSL…FEVGPACFMG (233 aa)) constitute a propeptide, C-terminal propeptide. The Fibrillar collagen NC1 domain occupies 1609–1837 (EEIFGSLNSL…GFEVGPACFM (229 aa)). 3 disulfides stabilise this stretch: Cys1639-Cys1671, Cys1680-Cys1835, and Cys1746-Cys1789. Ca(2+)-binding residues include Asp1657, Asn1659, Gln1660, Cys1662, and Asp1665.

Belongs to the fibrillar collagen family. Trimers of two alpha 1(V) and one alpha 2(V) chains in most tissues and trimers of one alpha 1(V), one alpha 2(V), and one alpha 3(V) chains in placenta. Interacts with CSPG4. Post-translationally, prolines at the third position of the tripeptide repeating unit (G-X-Y) are hydroxylated in some or all of the chains. Sulfated on 40% of tyrosines.

It localises to the secreted. The protein localises to the extracellular space. Its subcellular location is the extracellular matrix. Type V collagen is a member of group I collagen (fibrillar forming collagen). It is a minor connective tissue component of nearly ubiquitous distribution. Type V collagen binds to DNA, heparan sulfate, thrombospondin, heparin, and insulin. This Homo sapiens (Human) protein is Collagen alpha-1(V) chain (COL5A1).